Reading from the N-terminus, the 680-residue chain is Methionine--tRNA ligase (680 aa).

The short motif at 15 to 25 (PYANGPVHIGH) is the 'HIGH' region element. The Zn(2+) site is built by C147, C150, C160, and C163. A 'KMSKS' region motif is present at residues 332–336 (KISTS). T335 contributes to the ATP binding site. A tRNA-binding domain is found at 579 to 680 (DFLKLDIRVG…AEVAPGSQVK (102 aa)).

This sequence belongs to the class-I aminoacyl-tRNA synthetase family. MetG type 1 subfamily. Homodimer. Zn(2+) serves as cofactor.

It localises to the cytoplasm. The catalysed reaction is tRNA(Met) + L-methionine + ATP = L-methionyl-tRNA(Met) + AMP + diphosphate. Its function is as follows. Is required not only for elongation of protein synthesis but also for the initiation of all mRNA translation through initiator tRNA(fMet) aminoacylation. This Porphyromonas gingivalis (strain ATCC 33277 / DSM 20709 / CIP 103683 / JCM 12257 / NCTC 11834 / 2561) protein is Methionine--tRNA ligase.